The following is a 58-amino-acid chain: Small ribosomal subunit protein bS21A (58 aa).

The segment at 38 to 58 is disordered; sequence YEKPSLRRKRKAEAARKGGRN. Positions 49-58 are enriched in basic and acidic residues; sequence AEAARKGGRN.

It belongs to the bacterial ribosomal protein bS21 family.

The chain is Small ribosomal subunit protein bS21A from Trichormus variabilis (strain ATCC 29413 / PCC 7937) (Anabaena variabilis).